A 24-amino-acid polypeptide reads, in one-letter code: Brevinin-1Bd (24 aa).

Residues cysteine 18 and cysteine 24 are joined by a disulfide bond.

As to expression, expressed by the skin glands.

The protein resides in the secreted. In terms of biological role, antibacterial activity against Gram-positive bacterium S.aureus and Gram-negative bacterium E.coli. Has activity against C.albicans. The sequence is that of Brevinin-1Bd from Lithobates berlandieri (Rio Grande leopard frog).